A 355-amino-acid polypeptide reads, in one-letter code: UDP-N-acetylglucosamine--N-acetylmuramyl-(pentapeptide) pyrophosphoryl-undecaprenol N-acetylglucosamine transferase (355 aa).

Residues 15 to 17 (TGG), Asn127, Arg163, Ser191, Ile244, 263 to 268 (ALTVSE), and Gln288 contribute to the UDP-N-acetyl-alpha-D-glucosamine site.

It belongs to the glycosyltransferase 28 family. MurG subfamily.

It is found in the cell inner membrane. The catalysed reaction is di-trans,octa-cis-undecaprenyl diphospho-N-acetyl-alpha-D-muramoyl-L-alanyl-D-glutamyl-meso-2,6-diaminopimeloyl-D-alanyl-D-alanine + UDP-N-acetyl-alpha-D-glucosamine = di-trans,octa-cis-undecaprenyl diphospho-[N-acetyl-alpha-D-glucosaminyl-(1-&gt;4)]-N-acetyl-alpha-D-muramoyl-L-alanyl-D-glutamyl-meso-2,6-diaminopimeloyl-D-alanyl-D-alanine + UDP + H(+). It functions in the pathway cell wall biogenesis; peptidoglycan biosynthesis. In terms of biological role, cell wall formation. Catalyzes the transfer of a GlcNAc subunit on undecaprenyl-pyrophosphoryl-MurNAc-pentapeptide (lipid intermediate I) to form undecaprenyl-pyrophosphoryl-MurNAc-(pentapeptide)GlcNAc (lipid intermediate II). In Escherichia coli O139:H28 (strain E24377A / ETEC), this protein is UDP-N-acetylglucosamine--N-acetylmuramyl-(pentapeptide) pyrophosphoryl-undecaprenol N-acetylglucosamine transferase.